The chain runs to 652 residues: Bifunctional protein ThiO/ThiG (652 aa).

Residues 1 to 366 (MTRDIVIIGG…HYSRSQKQAS (366 aa)) form a thiO region. Residues 5–19 (IVIIGGGVIGLAIAV) and 44–46 (AGM) contribute to the FAD site. Glutamate 52 is a glycine binding site. Valine 173 contributes to the FAD binding site. 2 residues coordinate glycine: arginine 301 and arginine 327. 325–331 (HYRNGIL) contributes to the FAD binding site. The tract at residues 393-652 (PLIIAGKSFH…ASSPVTGTIS (260 aa)) is thiG. Lysine 494 acts as the Schiff-base intermediate with DXP in catalysis. 1-deoxy-D-xylulose 5-phosphate-binding positions include glycine 555, 581–582 (AG), and 603–604 (NS).

The protein in the N-terminal section; belongs to the DAO family. ThiO subfamily. In the C-terminal section; belongs to the ThiG family. Interacts with ThiH and ThiS. The cofactor is FAD.

It localises to the cytoplasm. The enzyme catalyses glycine + O2 + H2O = glyoxylate + H2O2 + NH4(+). The catalysed reaction is [ThiS sulfur-carrier protein]-C-terminal-Gly-aminoethanethioate + 2-iminoacetate + 1-deoxy-D-xylulose 5-phosphate = [ThiS sulfur-carrier protein]-C-terminal Gly-Gly + 2-[(2R,5Z)-2-carboxy-4-methylthiazol-5(2H)-ylidene]ethyl phosphate + 2 H2O + H(+). Its pathway is cofactor biosynthesis; thiamine diphosphate biosynthesis. Functionally, catalyzes the FAD-dependent oxidative deamination of glycine. Is essential for thiamine biosynthesis since the oxidation of glycine catalyzed by ThiO generates the glycine imine intermediate (dehydroglycine) required for the biosynthesis of the thiazole ring of thiamine pyrophosphate. In terms of biological role, catalyzes the rearrangement of 1-deoxy-D-xylulose 5-phosphate (DXP) to produce the thiazole phosphate moiety of thiamine. Sulfur is provided by the thiocarboxylate moiety of the carrier protein ThiS. In vitro, sulfur can be provided by H(2)S. The sequence is that of Bifunctional protein ThiO/ThiG (thiO/thiG) from Nostoc sp. (strain PCC 7120 / SAG 25.82 / UTEX 2576).